The following is a 218-amino-acid chain: Ribose-5-phosphate isomerase A (218 aa).

Residues 28–31, 81–84, and 94–97 contribute to the substrate site; these read TGST, DGAD, and KGGG. Glutamate 103 functions as the Proton acceptor in the catalytic mechanism. Position 121 (lysine 121) interacts with substrate.

The protein belongs to the ribose 5-phosphate isomerase family. Homodimer.

The catalysed reaction is aldehydo-D-ribose 5-phosphate = D-ribulose 5-phosphate. Its pathway is carbohydrate degradation; pentose phosphate pathway; D-ribose 5-phosphate from D-ribulose 5-phosphate (non-oxidative stage): step 1/1. In terms of biological role, catalyzes the reversible conversion of ribose-5-phosphate to ribulose 5-phosphate. The chain is Ribose-5-phosphate isomerase A from Shewanella sediminis (strain HAW-EB3).